The following is a 255-amino-acid chain: 5'-nucleotidase SurE (255 aa).

Residues Asp8, Asp9, Ser40, and Asn93 each contribute to the a divalent metal cation site.

Belongs to the SurE nucleotidase family. Requires a divalent metal cation as cofactor.

The protein localises to the cytoplasm. The enzyme catalyses a ribonucleoside 5'-phosphate + H2O = a ribonucleoside + phosphate. In terms of biological role, nucleotidase that shows phosphatase activity on nucleoside 5'-monophosphates. The chain is 5'-nucleotidase SurE from Nitrobacter winogradskyi (strain ATCC 25391 / DSM 10237 / CIP 104748 / NCIMB 11846 / Nb-255).